Consider the following 303-residue polypeptide: Elongation factor Ts (303 aa).

The segment at 80 to 83 (TDFV) is involved in Mg(2+) ion dislocation from EF-Tu.

The protein belongs to the EF-Ts family.

It is found in the cytoplasm. Its function is as follows. Associates with the EF-Tu.GDP complex and induces the exchange of GDP to GTP. It remains bound to the aminoacyl-tRNA.EF-Tu.GTP complex up to the GTP hydrolysis stage on the ribosome. This Clostridium perfringens (strain ATCC 13124 / DSM 756 / JCM 1290 / NCIMB 6125 / NCTC 8237 / Type A) protein is Elongation factor Ts.